The chain runs to 540 residues: GMP synthase [glutamine-hydrolyzing] (540 aa).

One can recognise a Glutamine amidotransferase type-1 domain in the interval 29-222; sequence KILIVDFGSQ…VRKVAGLTGD (194 aa). Residue Cys-106 is the Nucleophile of the active site. Catalysis depends on residues His-196 and Glu-198. The GMPS ATP-PPase domain occupies 223–415; that stretch reads WTMRAFREEA…LGLPDVFVGR (193 aa). Position 250–256 (250–256) interacts with ATP; sequence SGGVDSA.

As to quaternary structure, homodimer.

The enzyme catalyses XMP + L-glutamine + ATP + H2O = GMP + L-glutamate + AMP + diphosphate + 2 H(+). Its pathway is purine metabolism; GMP biosynthesis; GMP from XMP (L-Gln route): step 1/1. Catalyzes the synthesis of GMP from XMP. This chain is GMP synthase [glutamine-hydrolyzing], found in Rhodopseudomonas palustris (strain ATCC BAA-98 / CGA009).